Reading from the N-terminus, the 275-residue chain is Phosphate import ATP-binding protein PstB (275 aa).

The ABC transporter domain maps to 28 to 270 (MSAKNVSVFY…PREERTKDYI (243 aa)). 60-67 (GPSGCGKS) provides a ligand contact to ATP.

Belongs to the ABC transporter superfamily. Phosphate importer (TC 3.A.1.7) family. In terms of assembly, the complex is composed of two ATP-binding proteins (PstB), two transmembrane proteins (PstC and PstA) and a solute-binding protein (PstS).

It is found in the cell inner membrane. It carries out the reaction phosphate(out) + ATP + H2O = ADP + 2 phosphate(in) + H(+). Functionally, part of the ABC transporter complex PstSACB involved in phosphate import. Responsible for energy coupling to the transport system. The polypeptide is Phosphate import ATP-binding protein PstB (Novosphingobium aromaticivorans (strain ATCC 700278 / DSM 12444 / CCUG 56034 / CIP 105152 / NBRC 16084 / F199)).